Consider the following 362-residue polypeptide: CLIP domain-containing serine protease B10 (362 aa).

The signal sequence occupies residues 1 to 19 (MAKVVDCVLLLAFIAVVRG). The region spanning 22–75 (ACRTPDHRDGVCHPVQQCPSVRDEFFNSDRVLSEDEIDYLRKLQCKTKDVTICC) is the Clip domain. 3 disulfides stabilise this stretch: C23–C74, C33–C66, and C39–C75. The 252-residue stretch at 110–361 (IIGGNYTAID…YLDWIRQNIR (252 aa)) folds into the Peptidase S1 domain. N114 is a glycosylation site (N-linked (GlcNAc...) asparagine). C140 and C156 are oxidised to a cystine. Active-site charge relay system residues include H155 and D220. N254 is a glycosylation site (N-linked (GlcNAc...) asparagine). 2 cysteine pairs are disulfide-bonded: C285–C300 and C310–C337. S314 (charge relay system) is an active-site residue.

Belongs to the peptidase S1 family. CLIP subfamily. Forms a covalent heterodimer with SRPN2; the interaction inhibits CLIPB10 catalytic activity. Cleaved by an unknown protease into an active form.

Its subcellular location is the secreted. Inhibited by serpin SRPN2. Serine protease which preferentially cleaves after arginine residues. Involved in the innate immune response against parasite P.bergei infection by activating the melanization cascade. Probably in the hemolymph, cleaves and activates prophenoloxidase (PPO), which functions in the formation of pigments such as melanin and other polyphenolic compounds. In the susceptible strain G3, appears to be dispensable for ookinete elimination which occurs by lysis. This Anopheles gambiae (African malaria mosquito) protein is CLIP domain-containing serine protease B10.